Consider the following 445-residue polypeptide: Glutamyl-tRNA(Gln) amidotransferase subunit D (445 aa).

Residues 93-425 (SEIKIISTGG…EKIRSLMISN (333 aa)) enclose the Asparaginase/glutaminase domain. Active-site residues include threonine 103, threonine 179, aspartate 180, and lysine 258.

This sequence belongs to the asparaginase 1 family. GatD subfamily. In terms of assembly, heterodimer of GatD and GatE.

It catalyses the reaction L-glutamyl-tRNA(Gln) + L-glutamine + ATP + H2O = L-glutaminyl-tRNA(Gln) + L-glutamate + ADP + phosphate + H(+). Its function is as follows. Allows the formation of correctly charged Gln-tRNA(Gln) through the transamidation of misacylated Glu-tRNA(Gln) in organisms which lack glutaminyl-tRNA synthetase. The reaction takes place in the presence of glutamine and ATP through an activated gamma-phospho-Glu-tRNA(Gln). The GatDE system is specific for glutamate and does not act on aspartate. This Saccharolobus islandicus (strain Y.N.15.51 / Yellowstone #2) (Sulfolobus islandicus) protein is Glutamyl-tRNA(Gln) amidotransferase subunit D.